A 235-amino-acid polypeptide reads, in one-letter code: Calcium-activated potassium channel subunit beta-2 (235 aa).

The segment at 1–45 (MFIWTSGRTSSSYRQDEKRNIYQKIRDHDLLDKRKTVTALKAGED) is ball and chain. Topologically, residues 1 to 46 (MFIWTSGRTSSSYRQDEKRNIYQKIRDHDLLDKRKTVTALKAGEDR) are cytoplasmic. Residues 47-67 (AILLGLAMMVCSIMMYFLLGI) form a helical membrane-spanning segment. The Extracellular portion of the chain corresponds to 68 to 194 (TLLRSYMQSV…VILTKLYSSN (127 aa)). N-linked (GlcNAc...) asparagine glycans are attached at residues N88, N96, and N119. Residues 195-215 (VLFHSLFWPTCMMAGGVAIVA) traverse the membrane as a helical segment. Residues 216-235 (MVKLTQYLSLLCERIQRINR) are Cytoplasmic-facing.

This sequence belongs to the KCNMB (TC 8.A.14.1) family. KCNMB2 subfamily. As to quaternary structure, interacts with KCNMA1 tetramer. There are probably 4 molecules of KCMNB2 per KCNMA1 tetramer. In terms of processing, N-glycosylated.

Its subcellular location is the membrane. In terms of biological role, regulatory subunit of the calcium activated potassium KCNMA1 (maxiK) channel. Modulates the calcium sensitivity and gating kinetics of KCNMA1, thereby contributing to KCNMA1 channel diversity. Acts as a negative regulator that confers rapid and complete inactivation of KCNMA1 channel complex. The chain is Calcium-activated potassium channel subunit beta-2 (Kcnmb2) from Mus musculus (Mouse).